We begin with the raw amino-acid sequence, 77 residues long: Immune protein Tsi2 (77 aa).

As to quaternary structure, forms a heterotetramer with Tse2 consisting of two Tse2 dimers and two Tsi2 dimers. Formation of the complex inactivates Tse2 enzymatic activity.

In terms of biological role, immunity protein that plays a role in preventing early activation of toxin Tse2. Binds to a large surface of Tse2 and thereby occludes the active site to specifically inhibits Tse2. In Pseudomonas aeruginosa (strain ATCC 15692 / DSM 22644 / CIP 104116 / JCM 14847 / LMG 12228 / 1C / PRS 101 / PAO1), this protein is Immune protein Tsi2.